Here is a 162-residue protein sequence, read N- to C-terminus: GDNILKVDSFLTHQVDFSLMREIGKVFAEKFASAGITKVVTIEASGIAPAVFTAEALNVPMIFAKKAKNITMNEGILTAQVYSFTKQVTSTVSIAGKFLSPEDKVLIIDDFLANGQAAKGLIQIIEQAGATVEAIGIVIEKSFQDGRDLLEKAGYPVLSLAR.

L5 and T12 together coordinate xanthine. 113-117 (ANGQA) lines the 5-phospho-alpha-D-ribose 1-diphosphate pocket. Residue K141 participates in xanthine binding.

It belongs to the purine/pyrimidine phosphoribosyltransferase family. Xpt subfamily. In terms of assembly, homodimer.

The protein resides in the cytoplasm. The catalysed reaction is XMP + diphosphate = xanthine + 5-phospho-alpha-D-ribose 1-diphosphate. The protein operates within purine metabolism; XMP biosynthesis via salvage pathway; XMP from xanthine: step 1/1. Functionally, converts the preformed base xanthine, a product of nucleic acid breakdown, to xanthosine 5'-monophosphate (XMP), so it can be reused for RNA or DNA synthesis. The chain is Xanthine phosphoribosyltransferase (xpt) from Streptococcus mitis.